Reading from the N-terminus, the 696-residue chain is DNA ligase (696 aa).

NAD(+) contacts are provided by residues 36-40, 85-86, and Glu123; these read DAEYD and SL. The active-site N6-AMP-lysine intermediate is the Lys125. Residues Arg146, Glu181, Lys319, and Lys343 each coordinate NAD(+). Residues Cys437, Cys440, Cys455, and Cys461 each coordinate Zn(2+). In terms of domain architecture, BRCT spans 618-696; sequence PEGTSLAGKT…EDGLKALLGL (79 aa).

The protein belongs to the NAD-dependent DNA ligase family. LigA subfamily. It depends on Mg(2+) as a cofactor. The cofactor is Mn(2+).

The catalysed reaction is NAD(+) + (deoxyribonucleotide)n-3'-hydroxyl + 5'-phospho-(deoxyribonucleotide)m = (deoxyribonucleotide)n+m + AMP + beta-nicotinamide D-nucleotide.. In terms of biological role, DNA ligase that catalyzes the formation of phosphodiester linkages between 5'-phosphoryl and 3'-hydroxyl groups in double-stranded DNA using NAD as a coenzyme and as the energy source for the reaction. It is essential for DNA replication and repair of damaged DNA. The sequence is that of DNA ligase from Bordetella bronchiseptica (strain ATCC BAA-588 / NCTC 13252 / RB50) (Alcaligenes bronchisepticus).